Here is an 863-residue protein sequence, read N- to C-terminus: Bifunctional uridylyltransferase/uridylyl-removing enzyme (863 aa).

The uridylyltransferase stretch occupies residues 1-328 (MLFSPTLSSP…PSNQDTVIDQ (328 aa)). The uridylyl-removing stretch occupies residues 329 to 687 (LDDDFQLINQ…ISNRFSLGGT (359 aa)). The 123-residue stretch at 446 to 568 (VDEHTLRVML…VQNQVRLDYL (123 aa)) folds into the HD domain. ACT domains lie at 688–772 (EVFI…PNRQ) and 794–863 (QMEL…RNIG).

The protein belongs to the GlnD family. Requires Mg(2+) as cofactor.

It catalyses the reaction [protein-PII]-L-tyrosine + UTP = [protein-PII]-uridylyl-L-tyrosine + diphosphate. The enzyme catalyses [protein-PII]-uridylyl-L-tyrosine + H2O = [protein-PII]-L-tyrosine + UMP + H(+). Its activity is regulated as follows. Uridylyltransferase (UTase) activity is inhibited by glutamine, while glutamine activates uridylyl-removing (UR) activity. Its function is as follows. Modifies, by uridylylation and deuridylylation, the PII regulatory proteins (GlnB and homologs), in response to the nitrogen status of the cell that GlnD senses through the glutamine level. Under low glutamine levels, catalyzes the conversion of the PII proteins and UTP to PII-UMP and PPi, while under higher glutamine levels, GlnD hydrolyzes PII-UMP to PII and UMP (deuridylylation). Thus, controls uridylylation state and activity of the PII proteins, and plays an important role in the regulation of nitrogen assimilation and metabolism. The protein is Bifunctional uridylyltransferase/uridylyl-removing enzyme of Haemophilus influenzae (strain 86-028NP).